Reading from the N-terminus, the 616-residue chain is 2-isopropylmalate synthase (616 aa).

The interval 1–34 is disordered; the sequence is MSPNDAFISAPAKIETPVGPRNEGQPAWNKQRGS. The 275-residue stretch at 67-341 folds into the Pyruvate carboxyltransferase domain; the sequence is PQWCAVDLRD…DPQLDFTDIR (275 aa). Mg(2+) contacts are provided by Asp76, His280, His282, and Asn316. A regulatory domain region spans residues 490 to 616; that stretch reads RTAPVEQIAL…NHEAVLAGGV (127 aa).

The protein belongs to the alpha-IPM synthase/homocitrate synthase family. LeuA type 2 subfamily. As to quaternary structure, homodimer. Mg(2+) serves as cofactor.

The protein resides in the cytoplasm. The enzyme catalyses 3-methyl-2-oxobutanoate + acetyl-CoA + H2O = (2S)-2-isopropylmalate + CoA + H(+). It participates in amino-acid biosynthesis; L-leucine biosynthesis; L-leucine from 3-methyl-2-oxobutanoate: step 1/4. Its activity is regulated as follows. Inhibited by L-leucine, the pathway end product. Its function is as follows. Catalyzes the condensation of the acetyl group of acetyl-CoA with 3-methyl-2-oxobutanoate (2-ketoisovalerate) to form 3-carboxy-3-hydroxy-4-methylpentanoate (2-isopropylmalate). Complements an E.coli leuA deletion. This is 2-isopropylmalate synthase from Corynebacterium glutamicum (strain ATCC 13032 / DSM 20300 / JCM 1318 / BCRC 11384 / CCUG 27702 / LMG 3730 / NBRC 12168 / NCIMB 10025 / NRRL B-2784 / 534).